We begin with the raw amino-acid sequence, 465 residues long: UDP-N-acetylmuramoylalanine--D-glutamate ligase (465 aa).

124–130 (GSDGKTT) is an ATP binding site.

This sequence belongs to the MurCDEF family.

The protein resides in the cytoplasm. It carries out the reaction UDP-N-acetyl-alpha-D-muramoyl-L-alanine + D-glutamate + ATP = UDP-N-acetyl-alpha-D-muramoyl-L-alanyl-D-glutamate + ADP + phosphate + H(+). It participates in cell wall biogenesis; peptidoglycan biosynthesis. Its function is as follows. Cell wall formation. Catalyzes the addition of glutamate to the nucleotide precursor UDP-N-acetylmuramoyl-L-alanine (UMA). The protein is UDP-N-acetylmuramoylalanine--D-glutamate ligase of Ruminiclostridium cellulolyticum (strain ATCC 35319 / DSM 5812 / JCM 6584 / H10) (Clostridium cellulolyticum).